Here is a 613-residue protein sequence, read N- to C-terminus: Protein translocase subunit SecD (613 aa).

A run of 6 helical transmembrane segments spans residues 10 to 30, 452 to 472, 477 to 497, 503 to 523, 548 to 568, and 576 to 596; these read ALVV…WFYF, KGTL…VVYY, LVAD…MSMI, LPGI…NVLI, VFWT…VLFQ, and GFAV…IVVT.

This sequence belongs to the SecD/SecF family. SecD subfamily. Forms a complex with SecF. Part of the essential Sec protein translocation apparatus which comprises SecA, SecYEG and auxiliary proteins SecDF-YajC and YidC.

It is found in the cell inner membrane. Its function is as follows. Part of the Sec protein translocase complex. Interacts with the SecYEG preprotein conducting channel. SecDF uses the proton motive force (PMF) to complete protein translocation after the ATP-dependent function of SecA. This Anaeromyxobacter dehalogenans (strain 2CP-C) protein is Protein translocase subunit SecD.